The sequence spans 29 residues: Cytochrome b6-f complex subunit 8 (29 aa).

A helical transmembrane segment spans residues 3-23 (ILTLGWVSLLVVFTWSIAMVV).

The protein belongs to the PetN family. The 4 large subunits of the cytochrome b6-f complex are cytochrome b6, subunit IV (17 kDa polypeptide, PetD), cytochrome f and the Rieske protein, while the 4 small subunits are PetG, PetL, PetM and PetN. The complex functions as a dimer.

The protein resides in the cellular thylakoid membrane. Component of the cytochrome b6-f complex, which mediates electron transfer between photosystem II (PSII) and photosystem I (PSI), cyclic electron flow around PSI, and state transitions. The chain is Cytochrome b6-f complex subunit 8 from Nostoc punctiforme (strain ATCC 29133 / PCC 73102).